Reading from the N-terminus, the 446-residue chain is Ribosomal protein uS12 methylthiotransferase RimO (446 aa).

The MTTase N-terminal domain maps to 6-116 (PNIGFISLGC…VMQQVHKYVP (111 aa)). [4Fe-4S] cluster-binding residues include C15, C51, C80, C148, C152, and C155. The Radical SAM core domain occupies 134 to 375 (LTPKHYAYLK…MQLQQEISAA (242 aa)). The TRAM domain maps to 378 to 446 (QQKVGKVFTV…AYDLYASLIN (69 aa)).

Belongs to the methylthiotransferase family. RimO subfamily. Requires [4Fe-4S] cluster as cofactor.

It localises to the cytoplasm. It carries out the reaction L-aspartate(89)-[ribosomal protein uS12]-hydrogen + (sulfur carrier)-SH + AH2 + 2 S-adenosyl-L-methionine = 3-methylsulfanyl-L-aspartate(89)-[ribosomal protein uS12]-hydrogen + (sulfur carrier)-H + 5'-deoxyadenosine + L-methionine + A + S-adenosyl-L-homocysteine + 2 H(+). Its function is as follows. Catalyzes the methylthiolation of an aspartic acid residue of ribosomal protein uS12. The sequence is that of Ribosomal protein uS12 methylthiotransferase RimO from Pasteurella multocida (strain Pm70).